A 284-amino-acid polypeptide reads, in one-letter code: Protoheme IX farnesyltransferase (284 aa).

Transmembrane regions (helical) follow at residues 13-33, 35-55, 84-104, 106-126, 134-154, 163-183, 205-225, 229-249, and 264-284; these read VTVLVLATVLPGMYLGTTGYP, LTVISITLFGTYLMSSASFIL, FALLLGIVVAIVSFGILTYFI, LLTAVCALAALLLYVFLYTIW, NIVIGGISGCIGPLIGYAAMA, VMFLMIFLWTPAHFWALAIFL, VNQIFLYAIAYSLSVIGFYFV, MGYLFLLSAIVLTVLILGFAY, and FFFSILHLFLVSIAIVIDSKI.

Belongs to the UbiA prenyltransferase family. Protoheme IX farnesyltransferase subfamily.

Its subcellular location is the cell inner membrane. The catalysed reaction is heme b + (2E,6E)-farnesyl diphosphate + H2O = Fe(II)-heme o + diphosphate. It participates in porphyrin-containing compound metabolism; heme O biosynthesis; heme O from protoheme: step 1/1. Functionally, converts heme B (protoheme IX) to heme O by substitution of the vinyl group on carbon 2 of heme B porphyrin ring with a hydroxyethyl farnesyl side group. The sequence is that of Protoheme IX farnesyltransferase from Leptospira biflexa serovar Patoc (strain Patoc 1 / Ames).